The following is a 427-amino-acid chain: Flotillin-1 (427 aa).

Ser19, Ser163, and Ser385 each carry phosphoserine. Residue Thr387 is modified to Phosphothreonine.

This sequence belongs to the band 7/mec-2 family. Flotillin subfamily. Heterooligomeric complex of flotillin-1 and flotillin-2 and caveolin-1 and caveolin-2. Interacts with ECPAS.

The protein resides in the cell membrane. Its subcellular location is the endosome. It is found in the membrane. It localises to the caveola. The protein localises to the melanosome. The protein resides in the membrane raft. Functionally, may act as a scaffolding protein within caveolar membranes, functionally participating in formation of caveolae or caveolae-like vesicles. The chain is Flotillin-1 (FLOT1) from Sus scrofa (Pig).